The chain runs to 658 residues: Glycogen debranching enzyme (658 aa).

The active-site Nucleophile is aspartate 336. Catalysis depends on glutamate 371, which acts as the Proton donor. A disordered region spans residues 459 to 484 (EANGEENRDGTNSNYSDNHGKEGLGG).

The protein belongs to the glycosyl hydrolase 13 family.

It carries out the reaction Hydrolysis of (1-&gt;6)-alpha-D-glucosidic linkages to branches with degrees of polymerization of three or four glucose residues in limit dextrin.. Its pathway is glycan degradation; glycogen degradation. Its function is as follows. Removes maltotriose and maltotetraose chains that are attached by 1,6-alpha-linkage to the limit dextrin main chain, generating a debranched limit dextrin. The protein is Glycogen debranching enzyme of Salmonella paratyphi A (strain ATCC 9150 / SARB42).